Here is a 102-residue protein sequence, read N- to C-terminus: Protein translation factor SUI1 homolog (102 aa).

Belongs to the SUI1 family.

The sequence is that of Protein translation factor SUI1 homolog from Methanosarcina acetivorans (strain ATCC 35395 / DSM 2834 / JCM 12185 / C2A).